The following is a 412-amino-acid chain: Zinc finger protein 821 (412 aa).

Residues 26–83 (RQAMMKTDFPGDLGSQRQAIQQLRDQDSSSSDSEGDEEETTQDEVSSHTSEEDGGVVK) are disordered. A compositionally biased stretch (acidic residues) spans 58-67 (SEGDEEETTQ). C2H2-type zinc fingers lie at residues 116–140 (ELCQCPLCQLDCGSREQLIAHVYQH) and 150–172 (YMCPVCGRALSSPGSLGRHLLIH). Residues 257-366 (KWALRRQNEP…EKMDMMLRAQ (110 aa)) adopt a coiled-coil conformation. The disordered stretch occupies residues 278 to 319 (RTAKKSRRDNETPEEREVRRMRDREAKRLQRMQETDEQRARR).

This sequence belongs to the krueppel C2H2-type zinc-finger protein family.

The protein localises to the nucleus. Functionally, may be involved in transcriptional regulation. In Homo sapiens (Human), this protein is Zinc finger protein 821 (ZNF821).